A 511-amino-acid chain; its full sequence is Ribose import ATP-binding protein RbsA (511 aa).

ABC transporter domains follow at residues valine 13–alanine 249 and alanine 260–alanine 503. Glycine 45–serine 52 is a binding site for ATP.

This sequence belongs to the ABC transporter superfamily. Ribose importer (TC 3.A.1.2.1) family. The complex is composed of an ATP-binding protein (RbsA), two transmembrane proteins (RbsC) and a solute-binding protein (RbsB).

The protein localises to the cell inner membrane. The catalysed reaction is D-ribose(out) + ATP + H2O = D-ribose(in) + ADP + phosphate + H(+). Part of the ABC transporter complex RbsABC involved in ribose import. Responsible for energy coupling to the transport system. This chain is Ribose import ATP-binding protein RbsA, found in Roseobacter denitrificans (strain ATCC 33942 / OCh 114) (Erythrobacter sp. (strain OCh 114)).